The primary structure comprises 374 residues: Flap endonuclease 1 (374 aa).

The N-domain stretch occupies residues 1-105; the sequence is MGVKGLNQLI…GELEKRMIRK (105 aa). D34 serves as a coordination point for Mg(2+). DNA contacts are provided by R47 and R71. The Mg(2+) site is built by D87, E159, E161, D180, and D182. An I-domain region spans residues 123-254; the sequence is EMVRYEKRSV…VTAFKLIKEH (132 aa). Residue E159 participates in DNA binding. DNA is bound by residues G232 and D234. Residue D234 participates in Mg(2+) binding. Positions 341 to 349 are interaction with PCNA; the sequence is VQGRLDGFF. Positions 354 to 365 are enriched in basic and acidic residues; that stretch reads TEKRKPEQDKKT. Residues 354–374 form a disordered region; it reads TEKRKPEQDKKTKGSKKAKKK.

This sequence belongs to the XPG/RAD2 endonuclease family. FEN1 subfamily. Interacts with PCNA. Three molecules of FEN1 bind to one PCNA trimer with each molecule binding to one PCNA monomer. PCNA stimulates the nuclease activity without altering cleavage specificity. Mg(2+) serves as cofactor. Phosphorylated. Phosphorylation upon DNA damage induces relocalization to the nuclear plasma.

Its subcellular location is the nucleus. The protein resides in the nucleolus. It is found in the nucleoplasm. It localises to the mitochondrion. Structure-specific nuclease with 5'-flap endonuclease and 5'-3' exonuclease activities involved in DNA replication and repair. During DNA replication, cleaves the 5'-overhanging flap structure that is generated by displacement synthesis when DNA polymerase encounters the 5'-end of a downstream Okazaki fragment. It enters the flap from the 5'-end and then tracks to cleave the flap base, leaving a nick for ligation. Also involved in the long patch base excision repair (LP-BER) pathway, by cleaving within the apurinic/apyrimidinic (AP) site-terminated flap. Acts as a genome stabilization factor that prevents flaps from equilibrating into structures that lead to duplications and deletions. Also possesses 5'-3' exonuclease activity on nicked or gapped double-stranded DNA, and exhibits RNase H activity. Also involved in replication and repair of rDNA and in repairing mitochondrial DNA. This Meyerozyma guilliermondii (strain ATCC 6260 / CBS 566 / DSM 6381 / JCM 1539 / NBRC 10279 / NRRL Y-324) (Yeast) protein is Flap endonuclease 1.